A 662-amino-acid chain; its full sequence is MKPLEKFLKKQTSQLAGRTVAGGPGGGLGSCGGPGGGGGPGGGGGPAGGQRSLQRRQSVSRLLLPAFLREPPAEPGLEPPVPEEGGEPAGVAEEPGSGGPCWLQLEEVPGPGPLGGGGPLRSPSSYSSDELSPGEPLTSPPWAPLGAPERPEHLLNRVLERLAGGATRDSAASDILLDDIVLTHSLFLPTEKFLQELHQYFVRAGGMEGPEGLGRKQACLAMLLHFLDTYQGLLQEEEGAGHIIKDLYLLIMKDESLYQGLREDTLRLHQLVETVELKIPEENQPPSKQVKPLFRHFRRIDSCLQTRVAFRGSDEIFCRVYMPDHSYVTIRSRLSASVQDILGSVTEKLQYSEEPAGREDSLILVAVSSSGEKVLLQPTEDCVFTALGINSHLFACTRDSYEALVPLPEEIQVSPGDTEIHRVEPEDVANHLTAFHWELFRCVHELEFVDYVFHGERGRRETANLELLLQRCSEVTHWVATEVLLCEAPGKRAQLLKKFIKIAALCKQNQDLLSFYAVVMGLDNAAVSRLRLTWEKLPGKFKNLFRKFENLTDPCRNHKSYREVISKMKPPVIPFVPLILKDLTFLHEGSKTLVDGLVNIEKLHSVAEKVRTIRKYRSRPLCLDMEASPNHLQTKAYVRQFQVIDNQNLLFELSYKLEANSQ.

The segment at 1-149 is disordered; the sequence is MKPLEKFLKK…PPWAPLGAPE (149 aa). Residues 20–48 are compositionally biased toward gly residues; the sequence is VAGGPGGGLGSCGGPGGGGGPGGGGGPAG. Positions 49 to 64 are enriched in low complexity; it reads GQRSLQRRQSVSRLLL. The span at 73-82 shows a compositional bias: pro residues; the sequence is AEPGLEPPVP. Residues 120–135 are compositionally biased toward low complexity; the sequence is LRSPSSYSSDELSPGE. The region spanning 424–660 is the Ras-GEF domain; the sequence is EPEDVANHLT…FELSYKLEAN (237 aa).

In terms of biological role, probable guanine nucleotide exchange factor (GEF). The protein is Rap guanine nucleotide exchange factor-like 1 (RAPGEFL1) of Homo sapiens (Human).